The sequence spans 300 residues: ETS homologous factor (300 aa).

Residues 29 to 115 (STCNVSSGFF…SNLQHLKWNG (87 aa)) enclose the PNT domain. The segment at 179 to 204 (LPIAESPDTKKEQDHPTKPHTKKHNP) is disordered. Basic and acidic residues predominate over residues 185–195 (PDTKKEQDHPT). Positions 207–289 (THLWEFIRDI…DGRRLVYKFG (83 aa)) form a DNA-binding region, ETS.

It belongs to the ETS family.

It is found in the nucleus. Functionally, transcriptional activator that may play a role in regulating epithelial cell differentiation and proliferation. May act as a repressor for a specific subset of ETS/AP-1-responsive genes, and as a modulator of the nuclear response to mitogen-activated protein kinase signaling cascades. Binds to DNA sequences containing the consensus nucleotide core sequence GGAA. Involved in regulation of TNFRSF10B/DR5 expression through Ets-binding sequences on the TNFRSF10B/DR5 promoter. This Bos taurus (Bovine) protein is ETS homologous factor (EHF).